Here is a 185-residue protein sequence, read N- to C-terminus: Threonylcarbamoyl-AMP synthase (185 aa).

Residues Asn5–Arg185 form the YrdC-like domain.

The protein belongs to the SUA5 family. TsaC subfamily.

Its subcellular location is the cytoplasm. The enzyme catalyses L-threonine + hydrogencarbonate + ATP = L-threonylcarbamoyladenylate + diphosphate + H2O. In terms of biological role, required for the formation of a threonylcarbamoyl group on adenosine at position 37 (t(6)A37) in tRNAs that read codons beginning with adenine. Catalyzes the conversion of L-threonine, HCO(3)(-)/CO(2) and ATP to give threonylcarbamoyl-AMP (TC-AMP) as the acyladenylate intermediate, with the release of diphosphate. The protein is Threonylcarbamoyl-AMP synthase of Nitrosococcus oceani (strain ATCC 19707 / BCRC 17464 / JCM 30415 / NCIMB 11848 / C-107).